The following is a 513-amino-acid chain: 2-isopropylmalate synthase (513 aa).

Positions 5 to 267 (LVIFDTTLRD…ETRIDTTQIV (263 aa)) constitute a Pyruvate carboxyltransferase domain. Residues Asp-14, His-202, His-204, and Asn-238 each coordinate Mn(2+). Residues 393–513 (KLVYSRVCSE…LDKVKAQGGV (121 aa)) form a regulatory domain region.

This sequence belongs to the alpha-IPM synthase/homocitrate synthase family. LeuA type 1 subfamily. As to quaternary structure, homodimer. Mn(2+) is required as a cofactor.

Its subcellular location is the cytoplasm. The catalysed reaction is 3-methyl-2-oxobutanoate + acetyl-CoA + H2O = (2S)-2-isopropylmalate + CoA + H(+). Its pathway is amino-acid biosynthesis; L-leucine biosynthesis; L-leucine from 3-methyl-2-oxobutanoate: step 1/4. Its function is as follows. Catalyzes the condensation of the acetyl group of acetyl-CoA with 3-methyl-2-oxobutanoate (2-ketoisovalerate) to form 3-carboxy-3-hydroxy-4-methylpentanoate (2-isopropylmalate). In Dechloromonas aromatica (strain RCB), this protein is 2-isopropylmalate synthase.